We begin with the raw amino-acid sequence, 123 residues long: UPF0102 protein PSEEN4497 (123 aa).

This sequence belongs to the UPF0102 family.

The sequence is that of UPF0102 protein PSEEN4497 from Pseudomonas entomophila (strain L48).